A 321-amino-acid polypeptide reads, in one-letter code: Malate dehydrogenase (321 aa).

Residues 10–15 and Asp-34 each bind NAD(+); that span reads GSGMIG. Residues Arg-83 and Arg-89 each contribute to the substrate site. NAD(+) is bound by residues Asn-96 and 119-121; that span reads ITN. The substrate site is built by Asn-121 and Arg-152. His-176 functions as the Proton acceptor in the catalytic mechanism.

This sequence belongs to the LDH/MDH superfamily. MDH type 3 family.

It carries out the reaction (S)-malate + NAD(+) = oxaloacetate + NADH + H(+). Functionally, catalyzes the reversible oxidation of malate to oxaloacetate. The polypeptide is Malate dehydrogenase (Sinorhizobium fredii (strain NBRC 101917 / NGR234)).